The following is a 447-amino-acid chain: Phosphoglucosamine mutase (447 aa).

The Phosphoserine intermediate role is filled by S102. Residues S102, D241, D243, and D245 each coordinate Mg(2+). Position 102 is a phosphoserine (S102).

Belongs to the phosphohexose mutase family. Requires Mg(2+) as cofactor. Activated by phosphorylation.

It carries out the reaction alpha-D-glucosamine 1-phosphate = D-glucosamine 6-phosphate. Functionally, catalyzes the conversion of glucosamine-6-phosphate to glucosamine-1-phosphate. The chain is Phosphoglucosamine mutase from Hamiltonella defensa subsp. Acyrthosiphon pisum (strain 5AT).